A 273-amino-acid polypeptide reads, in one-letter code: Glutamate 5-kinase (273 aa).

An ATP-binding site is contributed by lysine 15. Serine 55, aspartate 142, and asparagine 158 together coordinate substrate. ATP contacts are provided by residues serine 178–aspartate 179 and threonine 220–lysine 226.

It belongs to the glutamate 5-kinase family.

It is found in the cytoplasm. The enzyme catalyses L-glutamate + ATP = L-glutamyl 5-phosphate + ADP. Its pathway is amino-acid biosynthesis; L-proline biosynthesis; L-glutamate 5-semialdehyde from L-glutamate: step 1/2. In terms of biological role, catalyzes the transfer of a phosphate group to glutamate to form L-glutamate 5-phosphate. This chain is Glutamate 5-kinase, found in Streptococcus pyogenes serotype M4 (strain MGAS10750).